The following is a 238-amino-acid chain: 7-cyano-7-deazaguanine synthase (238 aa).

10–20 contacts ATP; the sequence is LSGGLDSSTVL. 4 residues coordinate Zn(2+): cysteine 190, cysteine 198, cysteine 201, and cysteine 204.

Belongs to the QueC family. The cofactor is Zn(2+).

The enzyme catalyses 7-carboxy-7-deazaguanine + NH4(+) + ATP = 7-cyano-7-deazaguanine + ADP + phosphate + H2O + H(+). It functions in the pathway purine metabolism; 7-cyano-7-deazaguanine biosynthesis. Functionally, catalyzes the ATP-dependent conversion of 7-carboxy-7-deazaguanine (CDG) to 7-cyano-7-deazaguanine (preQ(0)). The polypeptide is 7-cyano-7-deazaguanine synthase (Thermoplasma acidophilum (strain ATCC 25905 / DSM 1728 / JCM 9062 / NBRC 15155 / AMRC-C165)).